The sequence spans 308 residues: ADP-L-glycero-D-manno-heptose-6-epimerase (308 aa).

Residues 10 to 11 (FI), 31 to 32 (DN), K38, K53, 75 to 79 (EGACS), and N92 each bind NADP(+). Y139 functions as the Proton acceptor in the catalytic mechanism. K143 serves as a coordination point for NADP(+). N168 is a substrate binding site. Residues V169 and K177 each coordinate NADP(+). Residue K177 is the Proton acceptor of the active site. Residues S179, H186, 200–203 (FAGS), R208, and Y271 contribute to the substrate site.

Belongs to the NAD(P)-dependent epimerase/dehydratase family. HldD subfamily. As to quaternary structure, homopentamer. It depends on NADP(+) as a cofactor.

The enzyme catalyses ADP-D-glycero-beta-D-manno-heptose = ADP-L-glycero-beta-D-manno-heptose. Its pathway is nucleotide-sugar biosynthesis; ADP-L-glycero-beta-D-manno-heptose biosynthesis; ADP-L-glycero-beta-D-manno-heptose from D-glycero-beta-D-manno-heptose 7-phosphate: step 4/4. Its function is as follows. Catalyzes the interconversion between ADP-D-glycero-beta-D-manno-heptose and ADP-L-glycero-beta-D-manno-heptose via an epimerization at carbon 6 of the heptose. The sequence is that of ADP-L-glycero-D-manno-heptose-6-epimerase from Haemophilus influenzae (strain PittGG).